Reading from the N-terminus, the 88-residue chain is UPF0237 protein spr0217 (88 aa).

Positions 4 to 77 (IITVVGKDKS…QTLNVKINIQ (74 aa)) constitute an ACT domain.

This sequence belongs to the UPF0237 family. As to quaternary structure, homodimer.

The sequence is that of UPF0237 protein spr0217 from Streptococcus pneumoniae (strain ATCC BAA-255 / R6).